A 234-amino-acid chain; its full sequence is MQQSKEQRVHGVFEKIYKNYDQMNSVISFKQHKKWRDKTMKLMNVQKGAKALDVCCGTADWTIALADAVGDKGEVKGLDFSKNMLSVGETKVKSGGYNQIELLHGNAMELPFEDNTFDYVTIGFGLRNVPDYLTVLKEMTRVVKPGGMVVCLETSQPEMIGFKQGYYVYFKYIMPLFGKLFAKSYQEYSWLQESAKAFPGMKELAALFEEAGLSDVSYHPFTGGVAATHIGKKL.

S-adenosyl-L-methionine contacts are provided by residues Thr-58, Asp-79, and 106–107 (NA).

This sequence belongs to the class I-like SAM-binding methyltransferase superfamily. MenG/UbiE family.

It catalyses the reaction a 2-demethylmenaquinol + S-adenosyl-L-methionine = a menaquinol + S-adenosyl-L-homocysteine + H(+). It participates in quinol/quinone metabolism; menaquinone biosynthesis; menaquinol from 1,4-dihydroxy-2-naphthoate: step 2/2. Its function is as follows. Methyltransferase required for the conversion of demethylmenaquinol (DMKH2) to menaquinol (MKH2). This is Demethylmenaquinone methyltransferase from Bacillus pumilus (strain SAFR-032).